The chain runs to 453 residues: Putative sodium-coupled neutral amino acid transporter 11 (453 aa).

The tract at residues Met1–Ser34 is disordered. The span at Leu12–Gly32 shows a compositional bias: basic and acidic residues. The next 11 helical transmembrane spans lie at Ala39 to Met59, Leu66 to Ile86, Gly106 to Ile126, Phe152 to Leu172, Leu179 to Thr199, Ala222 to Val242, Ile262 to Gly282, Val299 to Phe319, Val337 to Ile357, Cys359 to Ile379, and Met399 to Ile419.

It belongs to the amino acid/polyamine transporter 2 family. In terms of tissue distribution, widely expressed.

It localises to the membrane. In terms of biological role, putative sodium-dependent amino acid/proton antiporter. The polypeptide is Putative sodium-coupled neutral amino acid transporter 11 (Slc38a11) (Rattus norvegicus (Rat)).